The following is a 386-amino-acid chain: 8-amino-7-oxononanoate synthase (386 aa).

Arginine 31 contributes to the substrate binding site. 109–110 lines the pyridoxal 5'-phosphate pocket; sequence GY. Histidine 134 contacts substrate. Pyridoxal 5'-phosphate-binding positions include serine 180, 205–208, and 236–239; these read DEAH and TLSK. Lysine 239 carries the post-translational modification N6-(pyridoxal phosphate)lysine. A substrate-binding site is contributed by threonine 349.

This sequence belongs to the class-II pyridoxal-phosphate-dependent aminotransferase family. BioF subfamily. In terms of assembly, homodimer. The cofactor is pyridoxal 5'-phosphate.

It catalyses the reaction 6-carboxyhexanoyl-[ACP] + L-alanine + H(+) = (8S)-8-amino-7-oxononanoate + holo-[ACP] + CO2. Its pathway is cofactor biosynthesis; biotin biosynthesis. Functionally, catalyzes the decarboxylative condensation of pimeloyl-[acyl-carrier protein] and L-alanine to produce 8-amino-7-oxononanoate (AON), [acyl-carrier protein], and carbon dioxide. This Mycobacterium bovis (strain ATCC BAA-935 / AF2122/97) protein is 8-amino-7-oxononanoate synthase.